A 275-amino-acid polypeptide reads, in one-letter code: Large ribosomal subunit protein uL2 (275 aa).

Residues 227–261 (PVDHPHGGGEAKSGQGNPHPVTPWGVPTKGYKTRK) are disordered.

The protein belongs to the universal ribosomal protein uL2 family. Part of the 50S ribosomal subunit. Forms a bridge to the 30S subunit in the 70S ribosome.

In terms of biological role, one of the primary rRNA binding proteins. Required for association of the 30S and 50S subunits to form the 70S ribosome, for tRNA binding and peptide bond formation. It has been suggested to have peptidyltransferase activity; this is somewhat controversial. Makes several contacts with the 16S rRNA in the 70S ribosome. The polypeptide is Large ribosomal subunit protein uL2 (Xylella fastidiosa (strain M23)).